The primary structure comprises 253 residues: DNA polymerase III subunit epsilon (253 aa).

A divalent metal cation contacts are provided by Asp-14 and Glu-16. Substrate is bound by residues Asp-14, Glu-16, Asp-63, and His-68. His-163 functions as the Proton acceptor in the catalytic mechanism. Asp-168 is an a divalent metal cation binding site. Residue Asp-168 coordinates substrate.

DNA polymerase III contains a core (composed of alpha, epsilon and theta chains) that associates with a tau subunit. This core dimerizes to form the POLIII' complex. PolIII' associates with the gamma complex (composed of gamma, delta, delta', psi and chi chains) and with the beta chain to form the complete DNA polymerase III complex. Mg(2+) is required as a cofactor. The cofactor is Mn(2+).

The enzyme catalyses DNA(n) + a 2'-deoxyribonucleoside 5'-triphosphate = DNA(n+1) + diphosphate. Its function is as follows. DNA polymerase III is a complex, multichain enzyme responsible for most of the replicative synthesis in bacteria. The epsilon subunit contain the editing function and is a proofreading 3'-5' exonuclease. This chain is DNA polymerase III subunit epsilon (dnaQ), found in Pasteurella multocida (strain Pm70).